Here is a 251-residue protein sequence, read N- to C-terminus: Chloride intracellular channel protein 5 (251 aa).

The required for insertion into the membrane stretch occupies residues 1–98 (MTDSATANGD…EEFLEETLTP (98 aa)). The G-site signature appears at 32 to 35 (CPFS). The chain crosses the membrane as a helical span at residues 34–54 (FSQRLFMILWLKGVVFNVTTV). The GST C-terminal domain maps to 101–241 (YPKLAARHRE…AADSEIELAY (141 aa)).

The protein belongs to the chloride channel CLIC family. Component of a multimeric complex consisting of several cytoskeletal proteins, including actin, ezrin, alpha-actinin, gelsolin, and IQGAP1. Interacts with AKAP9. Interacts with TPRN. TPRN, CLIC5 and PTPQR form concentric rings at the base of stereocilia and may form a complex. Interacts with EZR, MYO6 and RDX; the proteins may work together as a complex to stabilize linkages between the plasma membrane and subjacent actin cytoskeleton at the stereocilium base. In terms of tissue distribution, detected in cochlea, in cochlear and vestibular hair cell bundles in the organ of Corti (at protein level). Expressed neonatal and adult cardiomyocytes (at protein level).

It localises to the golgi apparatus. It is found in the cytoplasm. Its subcellular location is the cytoskeleton. The protein resides in the microtubule organizing center. The protein localises to the centrosome. It localises to the cell cortex. It is found in the membrane. Its subcellular location is the apical cell membrane. The protein resides in the mitochondrion. The protein localises to the cell projection. It localises to the stereocilium. The catalysed reaction is Na(+)(in) = Na(+)(out). It catalyses the reaction K(+)(in) = K(+)(out). It carries out the reaction chloride(in) = chloride(out). Its activity is regulated as follows. Inhibited by F-actin. In terms of biological role, in the soluble state, catalyzes glutaredoxin-like thiol disulfide exchange reactions with reduced glutathione as electron donor. Can insert into membranes and form non-selective ion channels almost equally permeable to Na(+), K(+) and Cl(-). Required for normal hearing. It is necessary for the formation of stereocilia in the inner ear and normal development of the organ of Corti. May play a role in the regulation of transepithelial ion absorption and secretion. Is required for the development and/or maintenance of the proper glomerular endothelial cell and podocyte architecture. Plays a role in formation of the lens suture in the eye, which is important for normal optical properties of the lens. This chain is Chloride intracellular channel protein 5 (Clic5), found in Rattus norvegicus (Rat).